The sequence spans 574 residues: MRETPEREEEPGTEAPCAASCHAQRILQTLNAYRRSGTLTDVVLRAGGRDFPCHRAALSAASAHFRGLFAAGRPERAAAVVPVGPETPGTAAALAVVLDYVYGAGVRLRAEDEAAAVLALAERLGVAGLREACARFLEGRLRAANSLALRRVAAAFSLASLAERCGRVLRQAFVEVTRHADFLELAPDEVAALLADPALRVAREEAVFEAAMRWVRHDAPARRGQLRRLLEHVRLPLLAPAYFLEKVEADELLQACGDCRPLLLEARACFILGREAGALRARPRRFMDLAEVIVVIGGCDRKGLLKLPFADAYHPESQRWTPLPSLPGYTRSEFASCALRNDIYVSGGHINSRDVWMFSSHLNTWIKVASMHKGRWRHKMVALQGQLFAVGGFDGLRRLRSVERYDPFSNTWAAIAPLPEAVSSAAVAPCAGQLYVIGGAGQDGVNTDKVQCFDPKEDQWSLRSPAPFLQRCLEAVSLEDTIYVVGGLMSKIFTYDPGSDVWREAADLPSPVESCGVTVCDGKVHILGGRDEHGESTSSVFTFDPGTGQVEAQPSLQRCTSSHGCVTIVQSLSR.

In terms of domain architecture, BTB spans 40 to 110; the sequence is TDVVLRAGGR…VYGAGVRLRA (71 aa). One can recognise a BACK domain in the interval 146-248; sequence SLALRRVAAA…APAYFLEKVE (103 aa). Kelch repeat units follow at residues 292 to 341, 343 to 385, 386 to 432, 434 to 480, 481 to 522, and 524 to 570; these read VIVV…ALRN, IYVS…ALQG, QLFA…PCAG, LYVI…SLED, TIYV…VCDG, and VHIL…TIVQ.

The sequence is that of Kelch-like protein 35 (Klhl35) from Mus musculus (Mouse).